We begin with the raw amino-acid sequence, 402 residues long: Deoxyguanosinetriphosphate triphosphohydrolase-like protein (402 aa).

The segment at 20–39 (PAFSRGRLVPEPESPTRTPF) is disordered. Positions 73 to 217 (RLTHTIEVAQ…AAIADDIAYN (145 aa)) constitute an HD domain.

Belongs to the dGTPase family. Type 2 subfamily.

The chain is Deoxyguanosinetriphosphate triphosphohydrolase-like protein from Brucella ovis (strain ATCC 25840 / 63/290 / NCTC 10512).